A 287-amino-acid polypeptide reads, in one-letter code: Protease HtpX homolog (287 aa).

A run of 2 helical transmembrane segments spans residues 4 to 24 (VGLFLATNLAILLLLGLVMSL) and 35 to 53 (LLLMAGCFGMGGSLISLAL). Zn(2+) is bound at residue His-139. The active site involves Glu-140. His-143 is a Zn(2+) binding site. Helical transmembrane passes span 147–167 (GDMVTLSLIQGVLNTFVIFLS) and 194–214 (AVSMLLEFVFGLFASMIVMWF). Glu-219 is a Zn(2+) binding site.

It belongs to the peptidase M48B family. Zn(2+) serves as cofactor.

It localises to the cell inner membrane. The protein is Protease HtpX homolog of Desulfotalea psychrophila (strain LSv54 / DSM 12343).